We begin with the raw amino-acid sequence, 339 residues long: Anthranilate phosphoribosyltransferase (339 aa).

Residues Gly79, 82 to 83 (GD), Ser87, 89 to 92 (NIST), 107 to 115 (KHGNRAASS), and Ala119 each bind 5-phospho-alpha-D-ribose 1-diphosphate. Gly79 provides a ligand contact to anthranilate. Ser91 contacts Mg(2+). An anthranilate-binding site is contributed by Asn110. Arg165 serves as a coordination point for anthranilate. 2 residues coordinate Mg(2+): Asp224 and Glu225.

Belongs to the anthranilate phosphoribosyltransferase family. As to quaternary structure, homodimer. Mg(2+) is required as a cofactor.

The catalysed reaction is N-(5-phospho-beta-D-ribosyl)anthranilate + diphosphate = 5-phospho-alpha-D-ribose 1-diphosphate + anthranilate. The protein operates within amino-acid biosynthesis; L-tryptophan biosynthesis; L-tryptophan from chorismate: step 2/5. Functionally, catalyzes the transfer of the phosphoribosyl group of 5-phosphorylribose-1-pyrophosphate (PRPP) to anthranilate to yield N-(5'-phosphoribosyl)-anthranilate (PRA). This chain is Anthranilate phosphoribosyltransferase, found in Lactiplantibacillus plantarum (strain ATCC BAA-793 / NCIMB 8826 / WCFS1) (Lactobacillus plantarum).